The primary structure comprises 141 residues: Protein X (141 aa).

A disordered region spans residues 25-52 (SSGPSFPRPAAGSAASSASSPSPSDDSD). Residues 68–113 (PCCLVFTCADLRTMDSTVNFVSWHANRQLGMPSKDLWTPYIKDQLL) are mitochondrial targeting sequence.

The protein belongs to the orthohepadnavirus protein X family. May form homodimer. May interact with host CEBPA, CFLAR, CREB1, DDB1, E4F1, HBXIP, HSPD1/HSP60, NFKBIA, POLR2E and SMAD4. Interacts with host SMC5-SMC6 complex and induces its degradation. Interacts with host TRPC4AP; leading to prevent ubiquitination of TRPC4AP. Interacts with host PLSCR1; this interaction promotes ubiquitination and degradation of HBx and impairs HBx-mediated cell proliferation. In terms of processing, a fraction may be phosphorylated in insect cells and HepG2 cells, a human hepatoblastoma cell line. Phosphorylated in vitro by host protein kinase C or mitogen-activated protein kinase. N-acetylated in insect cells.

It is found in the host cytoplasm. It localises to the host nucleus. The protein localises to the host mitochondrion. Multifunctional protein that plays a role in silencing host antiviral defenses and promoting viral transcription. Does not seem to be essential for HBV infection. May be directly involved in development of cirrhosis and liver cancer (hepatocellular carcinoma). Most of cytosolic activities involve modulation of cytosolic calcium. The effect on apoptosis is controversial depending on the cell types in which the studies have been conducted. May induce apoptosis by localizing in mitochondria and causing loss of mitochondrial membrane potential. May also modulate apoptosis by binding host CFLAR, a key regulator of the death-inducing signaling complex (DISC). Promotes viral transcription by using the host E3 ubiquitin ligase DDB1 to target the SMC5-SMC6 complex to proteasomal degradation. This host complex would otherwise bind to viral episomal DNA, and prevents its transcription. Moderately stimulates transcription of many different viral and cellular transcription elements. Promoters and enhancers stimulated by HBx contain DNA binding sites for NF-kappa-B, AP-1, AP-2, c-EBP, ATF/CREB, or the calcium-activated factor NF-AT. The protein is Protein X of Woodchuck hepatitis B virus (isolate 2) (WHV).